The chain runs to 279 residues: Pantothenate synthetase (279 aa).

26-33 (MGNLHEGH) is a binding site for ATP. H33 (proton donor) is an active-site residue. Q57 contributes to the (R)-pantoate binding site. Q57 serves as a coordination point for beta-alanine. 144 to 147 (GKKD) serves as a coordination point for ATP. (R)-pantoate is bound at residue Q150. ATP contacts are provided by residues V173 and 181-184 (LSSR).

It belongs to the pantothenate synthetase family. In terms of assembly, homodimer.

The protein localises to the cytoplasm. It carries out the reaction (R)-pantoate + beta-alanine + ATP = (R)-pantothenate + AMP + diphosphate + H(+). It participates in cofactor biosynthesis; (R)-pantothenate biosynthesis; (R)-pantothenate from (R)-pantoate and beta-alanine: step 1/1. Catalyzes the condensation of pantoate with beta-alanine in an ATP-dependent reaction via a pantoyl-adenylate intermediate. This Burkholderia cenocepacia (strain HI2424) protein is Pantothenate synthetase.